The chain runs to 572 residues: Oxygen-dependent choline dehydrogenase (572 aa).

Asp7–Glu36 contacts FAD. The Proton acceptor role is filled by His474.

This sequence belongs to the GMC oxidoreductase family. FAD serves as cofactor.

The catalysed reaction is choline + A = betaine aldehyde + AH2. It carries out the reaction betaine aldehyde + NAD(+) + H2O = glycine betaine + NADH + 2 H(+). It functions in the pathway amine and polyamine biosynthesis; betaine biosynthesis via choline pathway; betaine aldehyde from choline (cytochrome c reductase route): step 1/1. Its function is as follows. Involved in the biosynthesis of the osmoprotectant glycine betaine. Catalyzes the oxidation of choline to betaine aldehyde and betaine aldehyde to glycine betaine at the same rate. The polypeptide is Oxygen-dependent choline dehydrogenase (Paraburkholderia phymatum (strain DSM 17167 / CIP 108236 / LMG 21445 / STM815) (Burkholderia phymatum)).